The chain runs to 437 residues: MLREALRIGNRRWYSYKSVRRPNLGATGTPKMEPPKEQPEASSKAESGHGSLAKQLRAKILSTGPIPVAEYMREVLTNPQAGYYMNRDVFGREGDFITSPEISQIFGELVGIWLVSEWRKMGSPSPFQLVELGPGRGTLARDVLKVLTKFKQDAEFSMHMVEVSPFLSKAQAQRFCYSHQTLPEDAQLPHYQEGTTASGTKAFWHRRLEDVPQGFSLVLAHEFFDALPVHKLQLVDGKWQEVLIDVASSDGAQEASFRYVLSRSQTPVSSLYRPLPGETRSCLEHSLETERQVGLLAERIERDGGIALIMDYGHFGEKTDTFRAFKQHKLHDPLVEPGSADLTADVDFKLVRHIAETRGNVHCCGPVEQGLFLQRMQGEARLEQLLAHALPENQEIIRSGYEMLTDPAQMGTRFKFLAMFPGVLAAHLDKYPVVGFS.

Positions 21–49 (RPNLGATGTPKMEPPKEQPEASSKAESGH) are disordered.

Belongs to the NDUFAF7 family.

Its subcellular location is the mitochondrion. It carries out the reaction L-arginyl-[protein] + 2 S-adenosyl-L-methionine = N(omega),N(omega)'-dimethyl-L-arginyl-[protein] + 2 S-adenosyl-L-homocysteine + 2 H(+). Arginine methyltransferase involved in the assembly or stability of mitochondrial NADH:ubiquinone oxidoreductase complex (complex I). The sequence is that of Protein arginine methyltransferase NDUFAF7 homolog, mitochondrial from Drosophila melanogaster (Fruit fly).